A 434-amino-acid polypeptide reads, in one-letter code: Na(+)/H(+) antiporter NhaA 1 (434 aa).

The next 10 membrane-spanning stretches (helical) occupy residues T30–G50, L70–L90, A108–V128, V141–V161, F172–Y192, Q195–V215, F286–F306, V318–A338, V354–L374, and V386–S406.

It belongs to the NhaA Na(+)/H(+) (TC 2.A.33) antiporter family.

The protein resides in the cell membrane. The enzyme catalyses Na(+)(in) + 2 H(+)(out) = Na(+)(out) + 2 H(+)(in). Its function is as follows. Na(+)/H(+) antiporter that extrudes sodium in exchange for external protons. In Kineococcus radiotolerans (strain ATCC BAA-149 / DSM 14245 / SRS30216), this protein is Na(+)/H(+) antiporter NhaA 1.